Here is a 142-residue protein sequence, read N- to C-terminus: uncharacterized protein (142 aa).

This is an uncharacterized protein from Caenorhabditis elegans.